A 714-amino-acid chain; its full sequence is Hormonally up-regulated neu tumor-associated kinase (714 aa).

Over residues 1 to 15 the composition is skewed to low complexity; that stretch reads MPAAAGDGLLGEPAA. The tract at residues 1 to 26 is disordered; the sequence is MPAAAGDGLLGEPAAPGGGGGAEDAA. The Protein kinase domain occupies 62-320; sequence LIGSRKLGEG…IQQALANRWL (259 aa). Residues 68 to 76 and Lys-91 each bind ATP; that span reads LGEGSFAKV. Asp-186 serves as the catalytic Proton acceptor. Positions 437–461 are enriched in basic and acidic residues; the sequence is KKPKEQEKRGDFLHRPFSKKLDKNL. Disordered regions lie at residues 437-471, 518-552, and 590-660; these read KKPK…SGSL, MEFI…HKED, and ARRN…VKSR. Low complexity predominate over residues 599-611; it reads LSPGLPSGSMSPL. A compositionally biased stretch (basic and acidic residues) spans 623–635; that stretch reads AHEDKNSPPKEEG.

It belongs to the protein kinase superfamily. CAMK Ser/Thr protein kinase family. SNF1 subfamily.

It carries out the reaction L-seryl-[protein] + ATP = O-phospho-L-seryl-[protein] + ADP + H(+). It catalyses the reaction L-threonyl-[protein] + ATP = O-phospho-L-threonyl-[protein] + ADP + H(+). The protein is Hormonally up-regulated neu tumor-associated kinase (HUNK) of Pan troglodytes (Chimpanzee).